Consider the following 25-residue polypeptide: Tubulin alpha chain (25 aa).

Gln11 is a GTP binding site.

Belongs to the tubulin family. In terms of assembly, dimer of alpha and beta chains. A typical microtubule is a hollow water-filled tube with an outer diameter of 25 nm and an inner diameter of 15 nM. Alpha-beta heterodimers associate head-to-tail to form protofilaments running lengthwise along the microtubule wall with the beta-tubulin subunit facing the microtubule plus end conferring a structural polarity. Microtubules usually have 13 protofilaments but different protofilament numbers can be found in some organisms and specialized cells. Requires Mg(2+) as cofactor.

It localises to the cytoplasm. Its subcellular location is the cytoskeleton. The enzyme catalyses GTP + H2O = GDP + phosphate + H(+). In terms of biological role, tubulin is the major constituent of microtubules, a cylinder consisting of laterally associated linear protofilaments composed of alpha- and beta-tubulin heterodimers. Microtubules grow by the addition of GTP-tubulin dimers to the microtubule end, where a stabilizing cap forms. Below the cap, tubulin dimers are in GDP-bound state, owing to GTPase activity of alpha-tubulin. The sequence is that of Tubulin alpha chain from Leptomonas seymouri.